Consider the following 115-residue polypeptide: NAD(P)H-quinone oxidoreductase subunit M (115 aa).

Belongs to the complex I NdhM subunit family. As to quaternary structure, NDH-1 can be composed of about 15 different subunits; different subcomplexes with different compositions have been identified which probably have different functions.

It localises to the cellular thylakoid membrane. The catalysed reaction is a plastoquinone + NADH + (n+1) H(+)(in) = a plastoquinol + NAD(+) + n H(+)(out). It catalyses the reaction a plastoquinone + NADPH + (n+1) H(+)(in) = a plastoquinol + NADP(+) + n H(+)(out). Functionally, NDH-1 shuttles electrons from an unknown electron donor, via FMN and iron-sulfur (Fe-S) centers, to quinones in the respiratory and/or the photosynthetic chain. The immediate electron acceptor for the enzyme in this species is believed to be plastoquinone. Couples the redox reaction to proton translocation, and thus conserves the redox energy in a proton gradient. Cyanobacterial NDH-1 also plays a role in inorganic carbon-concentration. The sequence is that of NAD(P)H-quinone oxidoreductase subunit M from Synechococcus sp. (strain CC9605).